The sequence spans 324 residues: Ribose-phosphate pyrophosphokinase (324 aa).

ATP contacts are provided by residues Asn-45–Glu-47 and Arg-104–Gln-105. His-138 and Asp-178 together coordinate Mg(2+). Lys-201 is an active-site residue. D-ribose 5-phosphate is bound by residues Arg-203, Asp-229, and Asp-233–Thr-237.

It belongs to the ribose-phosphate pyrophosphokinase family. Class I subfamily. In terms of assembly, homohexamer. Mg(2+) is required as a cofactor.

It localises to the cytoplasm. It carries out the reaction D-ribose 5-phosphate + ATP = 5-phospho-alpha-D-ribose 1-diphosphate + AMP + H(+). It participates in metabolic intermediate biosynthesis; 5-phospho-alpha-D-ribose 1-diphosphate biosynthesis; 5-phospho-alpha-D-ribose 1-diphosphate from D-ribose 5-phosphate (route I): step 1/1. In terms of biological role, involved in the biosynthesis of the central metabolite phospho-alpha-D-ribosyl-1-pyrophosphate (PRPP) via the transfer of pyrophosphoryl group from ATP to 1-hydroxyl of ribose-5-phosphate (Rib-5-P). The protein is Ribose-phosphate pyrophosphokinase of Streptomyces avermitilis (strain ATCC 31267 / DSM 46492 / JCM 5070 / NBRC 14893 / NCIMB 12804 / NRRL 8165 / MA-4680).